Reading from the N-terminus, the 139-residue chain is 3-hydroxyacyl-[acyl-carrier-protein] dehydratase FabZ (139 aa).

Residue histidine 46 is part of the active site.

This sequence belongs to the thioester dehydratase family. FabZ subfamily.

The protein localises to the cytoplasm. It catalyses the reaction a (3R)-hydroxyacyl-[ACP] = a (2E)-enoyl-[ACP] + H2O. Its function is as follows. Involved in unsaturated fatty acids biosynthesis. Catalyzes the dehydration of short chain beta-hydroxyacyl-ACPs and long chain saturated and unsaturated beta-hydroxyacyl-ACPs. This Streptococcus pyogenes serotype M1 protein is 3-hydroxyacyl-[acyl-carrier-protein] dehydratase FabZ.